Consider the following 323-residue polypeptide: Tyrosine--tRNA ligase (323 aa).

Y36 contributes to the L-tyrosine binding site. The 'HIGH' region motif lies at 41–49; that stretch reads PSGEIHLGH. L-tyrosine is bound by residues Y158, Q162, D165, and Q180. The short motif at 214 to 218 is the 'KMSKS' region element; that stretch reads KMSSS. S217 contributes to the ATP binding site.

It belongs to the class-I aminoacyl-tRNA synthetase family. TyrS type 3 subfamily. In terms of assembly, homodimer.

The protein localises to the cytoplasm. It catalyses the reaction tRNA(Tyr) + L-tyrosine + ATP = L-tyrosyl-tRNA(Tyr) + AMP + diphosphate + H(+). Its function is as follows. Catalyzes the attachment of tyrosine to tRNA(Tyr) in a two-step reaction: tyrosine is first activated by ATP to form Tyr-AMP and then transferred to the acceptor end of tRNA(Tyr). The sequence is that of Tyrosine--tRNA ligase from Archaeoglobus fulgidus (strain ATCC 49558 / DSM 4304 / JCM 9628 / NBRC 100126 / VC-16).